The chain runs to 261 residues: MDWKSMLRTGVHKPGALTAGLSVFLTLVYVLNWVFPINEKILLDPGALRKLQLTRLSLYPLAHLSIFHLLLNLMSLFVPLSMFEASHGTVFTGITLNLLAIVTGVVYCLVGMLLYPNVYVGGASGWCFTLCGYFAVQEAGFRPHYELASLKMPTLYIPLVFLVLVTLLMPGSSFVGHLIGLGLGYLIGFRERWLQMATPPGWLIVKIETWLDRWISMIPSVVKYHRESSVDRTAGYTPLYQESELPLHNDNFPGQGRVLGP.

5 helical membrane-spanning segments follow: residues 17–37 (LTAG…VFPI), 58–78 (LYPL…SLFV), 94–114 (ITLN…GMLL), 116–136 (PNVY…YFAV), and 155–175 (LYIP…SSFV). The active-site Nucleophile is S124. Residue H177 is part of the active site.

It belongs to the peptidase S54 family.

It is found in the golgi apparatus membrane. The protein resides in the golgi apparatus. The protein localises to the cis-Golgi network membrane. It carries out the reaction Cleaves type-1 transmembrane domains using a catalytic dyad composed of serine and histidine that are contributed by different transmembrane domains.. Probable rhomboid-type serine protease that catalyzes intramembrane proteolysis. This Eremothecium gossypii (strain ATCC 10895 / CBS 109.51 / FGSC 9923 / NRRL Y-1056) (Yeast) protein is Rhomboid-type serine protease 2 (RBD2).